Consider the following 488-residue polypeptide: SAGA complex subunit HFI1 (488 aa).

Disordered regions lie at residues 1–58 (MSAI…QGPN) and 352–383 (QLDD…IGDI). Positions 37 to 58 (AVSNHTEPNNGNNETAEPQGPN) are enriched in polar residues.

As to quaternary structure, component of the 1.8 MDa SAGA (Spt-Ada-Gcn5 acetyltransferase) complex, which is composed of 19 subunits TRA1, SPT7, TAF5, NGG1/ADA3, SGF73, SPT20/ADA5, SPT8, TAF12, TAF6, HFI1/ADA1, UBP8, GCN5, ADA2, SPT3, SGF29, TAF10, TAF9, SGF11 and SUS1. The SAGA complex is composed of 4 modules, namely the HAT (histone acetyltransferase) module (GCN5, ADA2, NGG1/ADA3 and SGF29), the DUB (deubiquitinating) module (UBP8, SGF11, SGF73 and SUS1), the core or TAF (TBP-associated factor) module (TAF5, TAF6, TAF9, TAF10 and TAF12), and the Tra1 or SPT (Suppressor of Ty) module (TRA1, HFI1/ADA1, SPT3, SPT7, SPT8 and SPT20/ADA5). The Tra1/SPT module binds activators, the core module recruits TBP (TATA-binding protein), the HAT module contains the histone H3 acetyltransferase GCN5, and the DUB module comprises the histone H2B deubiquitinase UBP8. Also identified in an altered form of SAGA, named SALSA (SAGA altered, Spt8 absent) or SLIK (SAGA-like) complex, which contains a C-terminal truncated form of SPT7 and is missing SPT8. However, it has been shown that the SAGA and SAGA-like SALSA/SLIK transcriptional coactivators are structurally and biochemically equivalent. Component of an ADA/GCN5 complex that consists of HFI1/ADA1, ADA2, NGG1/ADA3, SPT20/ADA5 and GCN5 and probably is a subcomplex of SAGA.

The protein resides in the nucleus. Functionally, component of the transcription coactivator SAGA complex. SAGA acts as a general cofactor required for essentially all RNA polymerase II transcription. At the promoters, SAGA is required for transcription pre-initiation complex (PIC) recruitment. It influences RNA polymerase II transcriptional activity through different activities such as TBP interaction (via core/TAF module) and promoter selectivity, interaction with transcription activators (via Tra1/SPT module), and chromatin modification through histone acetylation (via HAT module) and deubiquitination (via DUB module). SAGA preferentially acetylates histones H3 (to form H3K9ac, H3K14ac, H3K18ac and H3K23ac) and H2B and deubiquitinates histone H2B. SAGA interacts with DNA via upstream activating sequences (UASs). Also identified in a modified version of SAGA named SALSA or SLIK. The cleavage of SPT7 and the absence of the SPT8 subunit in SLIK neither drive any major conformational differences in its structure compared with SAGA, nor significantly affect HAT, DUB, or DNA-binding activities. The polypeptide is SAGA complex subunit HFI1 (HFI1) (Saccharomyces cerevisiae (strain ATCC 204508 / S288c) (Baker's yeast)).